A 2357-amino-acid chain; its full sequence is Myosin-I heavy chain (2357 aa).

One can recognise a Myosin motor domain in the interval 13–688; sequence QPVEDMITLP…QYLKLEELRK (676 aa). Residue 106-113 coordinates ATP; sequence GESGAGKT. The segment at 579 to 586 is actin-binding; it reads YVRCIKPN. The IQ domain occupies 691 to 720; it reads LLKKVTLIQSVWRMYRCKKRYQQIRASAKI. Residues 787-891 adopt a coiled-coil conformation; that stretch reads KRDRNARMLE…QDKNINELDD (105 aa). Residues 787-1076 are binding to talin A; sequence KRDRNARMLE…PILGAPPPPP (290 aa). Disordered stretches follow at residues 797-852 and 974-1112; these read IQRE…EEEL and ASSF…NPQP. 2 stretches are compositionally biased toward low complexity: residues 1003-1025 and 1078-1106; these read NNNYINSNNGDLPLPTSQSSDFS and TSDSTSPSATATGNNTPNSSSASASQSTN. In terms of domain architecture, MyTH4 1 spans 1155 to 1313; that stretch reads YQKSHIKSSL…PSVTELESIK (159 aa). In terms of domain architecture, FERM 1 spans 1318 to 1620; the sequence is IFVRITATDG…EYSLYLRNNA (303 aa). An SH3 domain is found at 1618 to 1678; sequence NNAKYARALK…PVDHVEILLS (61 aa). Positions 1686-1849 are disordered; that stretch reads VHPVATLSPP…PSKRLTVSPA (164 aa). Pro residues predominate over residues 1706-1733; it reads TPPPPPSISDSMSPPPQVGMLPPPPPPS. 2 stretches are compositionally biased toward low complexity: residues 1734–1746 and 1755–1770; these read VMGSTKPIEIPSL and SSNSSVPNSPIGSPMM. Positions 1817–1828 are enriched in polar residues; it reads FRSSLRVSMLNT. In terms of domain architecture, MyTH4 2 spans 1894 to 2051; sequence FNKDPIKESL…PSATEIQSFR (158 aa). The region spanning 2060 to 2357 is the FERM 2 domain; it reads STCKIRFIDQ…ASVYQFYSSQ (298 aa).

This sequence belongs to the TRAFAC class myosin-kinesin ATPase superfamily. Myosin family. As to quaternary structure, monomer. Interacts with talA.

The protein localises to the cytoplasm. Functionally, myosins are actin-based motor molecules with ATPase activity. Involved in the early steps of phagocytosis and adhesion. The sequence is that of Myosin-I heavy chain (myoI) from Dictyostelium discoideum (Social amoeba).